Here is a 253-residue protein sequence, read N- to C-terminus: Polyhedrin (253 aa).

Major component of the virus occlusion bodies, which are large proteinaceous structures (polyhedra), that protect the virus from the outside environment for extended periods until they are ingested by insect larvae. This chain is Polyhedrin, found in Orgyia pseudotsugata cypovirus (OpCPV).